The sequence spans 350 residues: Biotin synthase (350 aa).

The 228-residue stretch at 41-268 (NEVQISRLLS…KSRVRLSAGR (228 aa)) folds into the Radical SAM core domain. [4Fe-4S] cluster-binding residues include cysteine 56, cysteine 60, and cysteine 63. Residues cysteine 100, cysteine 131, cysteine 191, and arginine 263 each contribute to the [2Fe-2S] cluster site.

The protein belongs to the radical SAM superfamily. Biotin synthase family. As to quaternary structure, homodimer. [4Fe-4S] cluster serves as cofactor. [2Fe-2S] cluster is required as a cofactor.

The catalysed reaction is (4R,5S)-dethiobiotin + (sulfur carrier)-SH + 2 reduced [2Fe-2S]-[ferredoxin] + 2 S-adenosyl-L-methionine = (sulfur carrier)-H + biotin + 2 5'-deoxyadenosine + 2 L-methionine + 2 oxidized [2Fe-2S]-[ferredoxin]. The protein operates within cofactor biosynthesis; biotin biosynthesis; biotin from 7,8-diaminononanoate: step 2/2. Functionally, catalyzes the conversion of dethiobiotin (DTB) to biotin by the insertion of a sulfur atom into dethiobiotin via a radical-based mechanism. The sequence is that of Biotin synthase from Shewanella sp. (strain ANA-3).